The sequence spans 342 residues: MHLKASEKRALGRTGLTVTALGLGTAPLGGLYAPVSRADADALLEAGWDSGIRYFDSAPMYGYGRCEHLLGDMLREKPERAVISTKVGRLMTNERAGRTLPPAPPKNPLDSGWHNGLNFREVFDYSYDGVMRSFDDSQQRLGFPEIDLLYVHDIGRVTHADRHEFHWNALTRGGGFRALTELRAAGNIKGFGLGVNEWQIIRDALEEADLDCSLLAGRYSLLDQVSEKEFLPLAQKRGMALVIAGVFNSGILAAPRGGEQKFDYADAPAEIIARTNRLHDICDEYHVPLAAAAMQFPLRHEAVSSILIGVRSPEQIRQNVVWFEQSIPDEFWTTLRSEGLIS.

Asp56 is a catalytic residue. Residue Tyr61 is the Proton donor of the active site. Lys86 is an active-site residue. 245–255 (GVFNSGILAAP) is an NADP(+) binding site.

Belongs to the aldo/keto reductase family. In terms of assembly, homodimer.

The enzyme catalyses pyridoxal + NAD(+) = 4-pyridoxolactone + NADH + H(+). It participates in cofactor degradation; B6 vitamer degradation; 4-pyridoxate from pyridoxal: step 1/2. This chain is Pyridoxal 4-dehydrogenase (pld1), found in Microbacterium luteolum (Aureobacterium luteolum).